A 180-amino-acid chain; its full sequence is Adenine phosphoribosyltransferase (180 aa).

It belongs to the purine/pyrimidine phosphoribosyltransferase family. As to quaternary structure, homodimer.

It is found in the cytoplasm. It carries out the reaction AMP + diphosphate = 5-phospho-alpha-D-ribose 1-diphosphate + adenine. It participates in purine metabolism; AMP biosynthesis via salvage pathway; AMP from adenine: step 1/1. Its function is as follows. Catalyzes a salvage reaction resulting in the formation of AMP, that is energically less costly than de novo synthesis. This chain is Adenine phosphoribosyltransferase, found in Mannheimia succiniciproducens (strain KCTC 0769BP / MBEL55E).